Reading from the N-terminus, the 81-residue chain is Small ribosomal subunit protein bS16 (81 aa).

It belongs to the bacterial ribosomal protein bS16 family.

The polypeptide is Small ribosomal subunit protein bS16 (Agathobacter rectalis (strain ATCC 33656 / DSM 3377 / JCM 17463 / KCTC 5835 / VPI 0990) (Eubacterium rectale)).